A 275-amino-acid chain; its full sequence is Pyridoxal phosphate homeostasis protein (275 aa).

The residue at position 6 (serine 6) is a Phosphoserine. At lysine 47 the chain carries N6-(pyridoxal phosphate)lysine. Tyrosine 69 bears the Phosphotyrosine mark. At lysine 125 the chain carries N6-succinyllysine. 2 positions are modified to phosphoserine: serine 226 and serine 244.

It belongs to the pyridoxal phosphate-binding protein YggS/PROSC family.

Its function is as follows. Pyridoxal 5'-phosphate (PLP)-binding protein, which may be involved in intracellular homeostatic regulation of pyridoxal 5'-phosphate (PLP), the active form of vitamin B6. This Pongo abelii (Sumatran orangutan) protein is Pyridoxal phosphate homeostasis protein.